We begin with the raw amino-acid sequence, 243 residues long: uncharacterized protein (243 aa).

Positions 1–16 (MKHFIILFLLLFVTAG) are cleaved as a signal peptide. Residue Cys17 is the site of N-palmitoyl cysteine attachment. Cys17 is lipidated: S-diacylglycerol cysteine.

Its subcellular location is the cell membrane. This is an uncharacterized protein from Bacillus subtilis (strain 168).